We begin with the raw amino-acid sequence, 48 residues long: Large ribosomal subunit protein eL40 (48 aa).

Belongs to the eukaryotic ribosomal protein eL40 family.

This chain is Large ribosomal subunit protein eL40, found in Methanocella arvoryzae (strain DSM 22066 / NBRC 105507 / MRE50).